The sequence spans 304 residues: Neurexophilin-4 (304 aa).

The first 23 residues, 1-23, serve as a signal peptide directing secretion; that stretch reads MRLLPEWLLLLFGPWLLRKVISG. Positions 24 to 84 are II; it reads QIVESGRPQY…GALARPGAAG (61 aa). 4 N-linked (GlcNAc...) asparagine glycosylation sites follow: Asn72, Asn133, Asn143, and Asn149. Positions 85 to 163 are III; the sequence is GPPVPRTKRK…IVPPSKRVEF (79 aa). Positions 164–220 are IV (linker domain); sequence GGVWLPGPAPHPLQSTLALEGVLPGLGPPLGMAGQGLGGNLGGALAGPLGGALGVPG. The tract at residues 221 to 304 is v (Cys-rich); the sequence is AKESRAFNCH…NFQSEHPYFG (84 aa).

This sequence belongs to the neurexophilin family. Post-translationally, may be proteolytically processed in neuron-like cells. Brain and kidney.

It is found in the secreted. Functionally, may be signaling molecules that resemble neuropeptides and that act by binding to alpha-neurexins and possibly other receptors. This chain is Neurexophilin-4 (Nxph4), found in Rattus norvegicus (Rat).